A 204-amino-acid polypeptide reads, in one-letter code: Outer-membrane lipoprotein carrier protein (204 aa).

A signal peptide spans 1–21 (MKKLLVACCVVSGMMSASVLA).

This sequence belongs to the LolA family. In terms of assembly, monomer.

The protein localises to the periplasm. Participates in the translocation of lipoproteins from the inner membrane to the outer membrane. Only forms a complex with a lipoprotein if the residue after the N-terminal Cys is not an aspartate (The Asp acts as a targeting signal to indicate that the lipoprotein should stay in the inner membrane). The chain is Outer-membrane lipoprotein carrier protein from Edwardsiella ictaluri (strain 93-146).